We begin with the raw amino-acid sequence, 365 residues long: Chorismate synthase (365 aa).

NADP(+)-binding residues include Arg48 and Arg54. Residues 125-127 (RSS), 238-239 (NA), Ala278, 293-297 (KPTSS), and Arg319 contribute to the FMN site.

The protein belongs to the chorismate synthase family. Homotetramer. The cofactor is FMNH2.

The enzyme catalyses 5-O-(1-carboxyvinyl)-3-phosphoshikimate = chorismate + phosphate. Its pathway is metabolic intermediate biosynthesis; chorismate biosynthesis; chorismate from D-erythrose 4-phosphate and phosphoenolpyruvate: step 7/7. In terms of biological role, catalyzes the anti-1,4-elimination of the C-3 phosphate and the C-6 proR hydrogen from 5-enolpyruvylshikimate-3-phosphate (EPSP) to yield chorismate, which is the branch point compound that serves as the starting substrate for the three terminal pathways of aromatic amino acid biosynthesis. This reaction introduces a second double bond into the aromatic ring system. The protein is Chorismate synthase of Pseudoalteromonas translucida (strain TAC 125).